We begin with the raw amino-acid sequence, 135 residues long: Large ribosomal subunit protein bL19 (135 aa).

Belongs to the bacterial ribosomal protein bL19 family.

Its function is as follows. This protein is located at the 30S-50S ribosomal subunit interface and may play a role in the structure and function of the aminoacyl-tRNA binding site. The chain is Large ribosomal subunit protein bL19 from Xanthomonas campestris pv. campestris (strain 8004).